The sequence spans 493 residues: 3-octaprenyl-4-hydroxybenzoate carboxy-lyase (493 aa).

Residue N177 coordinates Mn(2+). Prenylated FMN-binding positions include 180 to 182, 194 to 196, and 199 to 200; these read IYR, RWL, and RG. Mn(2+) is bound at residue E243. Residue D292 is the Proton donor of the active site.

Belongs to the UbiD family. Homohexamer. Prenylated FMN is required as a cofactor. The cofactor is Mn(2+).

The protein resides in the cell membrane. The enzyme catalyses a 4-hydroxy-3-(all-trans-polyprenyl)benzoate + H(+) = a 2-(all-trans-polyprenyl)phenol + CO2. Its pathway is cofactor biosynthesis; ubiquinone biosynthesis. Functionally, catalyzes the decarboxylation of 3-octaprenyl-4-hydroxy benzoate to 2-octaprenylphenol, an intermediate step in ubiquinone biosynthesis. The sequence is that of 3-octaprenyl-4-hydroxybenzoate carboxy-lyase from Colwellia psychrerythraea (strain 34H / ATCC BAA-681) (Vibrio psychroerythus).